A 737-amino-acid chain; its full sequence is Catalase-peroxidase 2 (737 aa).

The disordered stretch occupies residues 1-33; the sequence is MPEATEHPPIGEAQTEPAQSGCPMVIKPPVEGG. A cross-link (tryptophyl-tyrosyl-methioninium (Trp-Tyr) (with M-261)) is located at residues 107 to 235; sequence WHAAGTYRVQ…LGASHMGLIY (129 aa). Catalysis depends on His108, which acts as the Proton acceptor. The segment at residues 235–261 is a cross-link (tryptophyl-tyrosyl-methioninium (Tyr-Met) (with W-107)); the sequence is YVNPEGPEGNPDPIAAAIDIRETFGRM. A heme-binding site is contributed by His276.

The protein belongs to the peroxidase family. Peroxidase/catalase subfamily. Homodimer or homotetramer. Heme b serves as cofactor. In terms of processing, formation of the three residue Trp-Tyr-Met cross-link is important for the catalase, but not the peroxidase activity of the enzyme.

It carries out the reaction H2O2 + AH2 = A + 2 H2O. The catalysed reaction is 2 H2O2 = O2 + 2 H2O. Bifunctional enzyme with both catalase and broad-spectrum peroxidase activity. The protein is Catalase-peroxidase 2 of Mycolicibacterium vanbaalenii (strain DSM 7251 / JCM 13017 / BCRC 16820 / KCTC 9966 / NRRL B-24157 / PYR-1) (Mycobacterium vanbaalenii).